We begin with the raw amino-acid sequence, 425 residues long: Lysosome-associated membrane glycoprotein 2 (425 aa).

The N-terminal stretch at 1–27 (MAPPRCPAGLALLLLLLGACGFFQSYA) is a signal peptide. Positions 28-192 (VEVDVKDASN…SKKESRCYAD (165 aa)) are first lumenal domain. The Lumenal portion of the chain corresponds to 28-389 (VEVDVKDASN…EECFADSDLN (362 aa)). N-linked (GlcNAc...) asparagine glycans are attached at residues Asn37, Asn56, Asn62, Asn74, Asn100, Asn105, Asn120, Asn163, Asn170, Asn179, Asn206, Asn232, Asn239, Asn252, Asn276, Asn287, Asn298, Asn312, Asn320, and Asn331. Cys40 and Cys78 form a disulfide bridge. Cys153 and Cys189 form a disulfide bridge. The hinge stretch occupies residues 193–238 (TPTAAPTVLPTVANVTTASTTISPAPTTAPKPAENPVTGNYSLKTG). Residues 239–390 (NKTCLLATVG…ECFADSDLNF (152 aa)) are second lumenal domain. Cys242 and Cys274 are disulfide-bonded. Cys345 and Cys382 are joined by a disulfide. Residues 390 to 414 (FLIPVAVGMALGFLIILVFISYIIG) form a helical membrane-spanning segment. Over 415–425 (RRKSRTGYQSV) the chain is Cytoplasmic. The tract at residues 416–419 (RKSR) is important for binding and subsequent lysosomal degradation of target proteins.

The protein belongs to the LAMP family. As to quaternary structure, monomer. Forms large homooligomers. In terms of processing, extensively N-glycosylated. Contains a minor proportion of O-linked glycans.

The protein resides in the lysosome membrane. It is found in the endosome membrane. Its subcellular location is the cell membrane. It localises to the cytoplasmic vesicle. The protein localises to the autophagosome membrane. Functionally, lysosomal membrane glycoprotein which plays an important role in lysosome biogenesis, lysosomal pH regulation and autophagy. Plays an important role in chaperone-mediated autophagy, a process that mediates lysosomal degradation of proteins in response to various stresses and as part of the normal turnover of proteins with a long biological half-live. In the chaperone-mediated autophagy, acts downstream of chaperones, such as HSPA8/HSC70, which recognize and bind substrate proteins and mediate their recruitment to lysosomes, where target proteins bind LAMP2. Plays a role in lysosomal protein degradation in response to starvation. Required for the fusion of autophagosomes with lysosomes during autophagy. In Gallus gallus (Chicken), this protein is Lysosome-associated membrane glycoprotein 2 (LAMP2).